A 71-amino-acid chain; its full sequence is Small ribosomal subunit protein bS21 (71 aa).

A disordered region spans residues 47–71 (RENATRAKRHAKRVARENARNTRLY). The segment covering 60-71 (VARENARNTRLY) has biased composition (basic and acidic residues).

It belongs to the bacterial ribosomal protein bS21 family.

In Histophilus somni (strain 129Pt) (Haemophilus somnus), this protein is Small ribosomal subunit protein bS21.